The following is a 222-amino-acid chain: Interleukin-12 subunit alpha (222 aa).

Positions 1–25 (MCPPRGLLLVAILVLLNHLDHLSLA) are cleaved as a signal peptide. 3 cysteine pairs are disulfide-bonded: C40/C113, C67/C199, and C88/C126. N-linked (GlcNAc...) asparagine glycans are attached at residues N42, N96, and N110.

It belongs to the IL-6 superfamily. As to quaternary structure, heterodimer with IL12B; disulfide-linked. This heterodimer is known as interleukin IL-12. Heterodimer with EBI3/IL27B; not disulfide-linked. This heterodimer is known as interleukin IL-35. Interacts with NBR1; this interaction promotes IL-12 secretion.

It localises to the secreted. Functionally, heterodimerizes with IL12B to form the IL-12 cytokine or with EBI3/IL27B to form the IL-35 cytokine. IL-12 is primarily produced by professional antigen-presenting cells (APCs) such as B-cells and dendritic cells (DCs) as well as macrophages and granulocytes and regulates T-cell and natural killer-cell responses, induces the production of interferon-gamma (IFN-gamma), favors the differentiation of T-helper 1 (Th1) cells and is an important link between innate resistance and adaptive immunity. Mechanistically, exerts its biological effects through a receptor composed of IL12R1 and IL12R2 subunits. Binding to the receptor results in the rapid tyrosine phosphorylation of a number of cellular substrates including the JAK family kinases TYK2 and JAK2. In turn, recruited STAT4 gets phosphorylated and translocates to the nucleus where it regulates cytokine/growth factor responsive genes. As part of IL-35, plays essential roles in maintaining the immune homeostasis of the liver microenvironment and also functions as an immune-suppressive cytokine. Mediates biological events through unconventional receptors composed of IL12RB2 and gp130/IL6ST heterodimers or homodimers. Signaling requires the transcription factors STAT1 and STAT4, which form a unique heterodimer that binds to distinct DNA sites. In Equus caballus (Horse), this protein is Interleukin-12 subunit alpha (IL12A).